A 350-amino-acid polypeptide reads, in one-letter code: tRNA uridine(34) hydroxylase (350 aa).

The region spanning 146-240 (DDPDAVFIDM…YARRAREQGL (95 aa)) is the Rhodanese domain. C200 (cysteine persulfide intermediate) is an active-site residue. The segment covering 319–328 (RRRRAGRENG) has biased composition (basic and acidic residues). The interval 319–350 (RRRRAGRENGNKIFNKSRGRLNSKLSIPDPAE) is disordered.

Belongs to the TrhO family.

It carries out the reaction uridine(34) in tRNA + AH2 + O2 = 5-hydroxyuridine(34) in tRNA + A + H2O. Functionally, catalyzes oxygen-dependent 5-hydroxyuridine (ho5U) modification at position 34 in tRNAs. This Salmonella typhi protein is tRNA uridine(34) hydroxylase.